A 503-amino-acid chain; its full sequence is Secreted RxLR effector protein RXLR-C08 (503 aa).

Positions methionine 1 to alanine 22 are cleaved as a signal peptide. N-linked (GlcNAc...) asparagine glycans are attached at residues asparagine 27, asparagine 35, and asparagine 45. The dEER signature appears at aspartate 57–arginine 60. Asparagine 108, asparagine 197, and asparagine 374 each carry an N-linked (GlcNAc...) asparagine glycan.

This sequence belongs to the RxLR effector family.

It is found in the secreted. Its subcellular location is the host Golgi apparatus. In terms of biological role, secreted effector that suppresses pattern-triggered immunity (PTI) in plant host. The chain is Secreted RxLR effector protein RXLR-C08 from Plasmopara halstedii (Downy mildew of sunflower).